A 360-amino-acid chain; its full sequence is Alanine racemase (360 aa).

The active-site Proton acceptor; specific for D-alanine is K33. N6-(pyridoxal phosphate)lysine is present on K33. Substrate is bound at residue R129. The active-site Proton acceptor; specific for L-alanine is the Y253. Substrate is bound at residue M301.

Belongs to the alanine racemase family. Pyridoxal 5'-phosphate is required as a cofactor.

It catalyses the reaction L-alanine = D-alanine. The protein operates within amino-acid biosynthesis; D-alanine biosynthesis; D-alanine from L-alanine: step 1/1. Its function is as follows. Catalyzes the interconversion of L-alanine and D-alanine. May also act on other amino acids. In Xanthomonas campestris pv. campestris (strain 8004), this protein is Alanine racemase (alr).